The sequence spans 423 residues: MFYSIFFIHILRIVLVDCNEYSEENVDDRHKWAVLVAGSNGFENYRHQADVCHAYHVLLSKGVKPEHIITFMYDDIAHNKENPFPGKIFNDYRHKDYYKGVVIDYKGKKVNPKTFLQVLKGDKRAGGKVLKSGKNDDVFIYFTDHGAPGILAFPDDDLHAKPFINTLKYLRQHRRYSKLVIYVEACESGSMFAGLLPTDINIYATTAARPDESSYATFCDDPRISSCLADLYSYDWIVDSEKHQLTQRTLDQQYKEVKFETNLSHVQRYGDKKMGKLYLSEFQGSRKKASTEHDEPPMKPKDSIPSRDIPLHTLHRRIMMANNMNDKTLLMKILGLKLKRRDLIKDTMEVIDQFMFNVKQPNSNATIDETMDCIEVVYKEFQSKCFKIQQAPEITGYLSTLYNYCQKGYSAENINGVIRKVCG.

An N-terminal signal peptide occupies residues 1 to 18 (MFYSIFFIHILRIVLVDC). Positions 19-29 (NEYSEENVDDR) are excised as a propeptide. Residues His-145 and Cys-186 contribute to the active site. The interval 286–307 (RKKASTEHDEPPMKPKDSIPSR) is disordered. The propeptide occupies 286–423 (RKKASTEHDE…INGVIRKVCG (138 aa)). Residues 289 to 305 (ASTEHDEPPMKPKDSIP) are compositionally biased toward basic and acidic residues.

It belongs to the peptidase C13 family. As to expression, gut.

It carries out the reaction Hydrolysis of proteins and small molecule substrates at -Asn-|-Xaa- bonds.. Its function is as follows. This protease is used by the parasite for degradation of the host globin. The polypeptide is Hemoglobinase (HAEM) (Schistosoma japonicum (Blood fluke)).